The following is a 347-amino-acid chain: Large ribosomal subunit protein uL3 (347 aa).

Belongs to the universal ribosomal protein uL3 family. As to quaternary structure, part of the 50S ribosomal subunit. Forms a cluster with proteins L14 and L24e.

Its function is as follows. One of the primary rRNA binding proteins, it binds directly near the 3'-end of the 23S rRNA, where it nucleates assembly of the 50S subunit. This Caldivirga maquilingensis (strain ATCC 700844 / DSM 13496 / JCM 10307 / IC-167) protein is Large ribosomal subunit protein uL3.